A 379-amino-acid polypeptide reads, in one-letter code: L-lactate dehydrogenase (379 aa).

Residues 1 to 379 enclose the FMN hydroxy acid dehydrogenase domain; sequence MIISASTDYR…ITSDLLVKER (379 aa). A substrate-binding site is contributed by Tyr-24. Positions 106 and 127 each coordinate FMN. Tyr-129 provides a ligand contact to substrate. Thr-155 provides a ligand contact to FMN. Arg-164 is a binding site for substrate. Lys-251 provides a ligand contact to FMN. Residue His-275 is the Proton acceptor of the active site. A substrate-binding site is contributed by Arg-278. 306-330 is an FMN binding site; that stretch reads DSGIRTGLDVVRMLALGADTVLLGR.

It belongs to the FMN-dependent alpha-hydroxy acid dehydrogenase family. As to quaternary structure, homotetramer. FMN serves as cofactor.

The protein resides in the cell inner membrane. The catalysed reaction is (S)-lactate + A = pyruvate + AH2. Catalyzes the conversion of L-lactate to pyruvate. Is coupled to the respiratory chain. The protein is L-lactate dehydrogenase of Ectopseudomonas mendocina (strain ymp) (Pseudomonas mendocina).